We begin with the raw amino-acid sequence, 65 residues long: Photosystem II reaction center protein J (65 aa).

Residues 35-55 traverse the membrane as a helical segment; that stretch reads LWLVATAGGTAVIFVLGIFFY.

This sequence belongs to the PsbJ family. As to quaternary structure, PSII is composed of 1 copy each of membrane proteins PsbA, PsbB, PsbC, PsbD, PsbE, PsbF, PsbH, PsbI, PsbJ, PsbK, PsbL, PsbM, PsbT, PsbX, PsbY, Psb30/Ycf12, peripheral proteins PsbO, CyanoQ (PsbQ), PsbU, PsbV and a large number of cofactors. It forms dimeric complexes.

The protein resides in the cellular thylakoid membrane. Functionally, one of the components of the core complex of photosystem II (PSII). PSII is a light-driven water:plastoquinone oxidoreductase that uses light energy to abstract electrons from H(2)O, generating O(2) and a proton gradient subsequently used for ATP formation. It consists of a core antenna complex that captures photons, and an electron transfer chain that converts photonic excitation into a charge separation. This chain is Photosystem II reaction center protein J, found in Prochlorococcus marinus (strain NATL1A).